The chain runs to 931 residues: Isoleucine--tRNA ligase (931 aa).

The 'HIGH' region signature appears at 58–68 (PYANGHLHCGH). An L-isoleucyl-5'-AMP-binding site is contributed by glutamate 559. The 'KMSKS' region motif lies at 600-604 (KLSKS). Lysine 603 is an ATP binding site. Zn(2+) is bound by residues cysteine 894, cysteine 897, cysteine 914, and cysteine 917.

It belongs to the class-I aminoacyl-tRNA synthetase family. IleS type 1 subfamily. As to quaternary structure, monomer. Zn(2+) serves as cofactor.

The protein localises to the cytoplasm. The enzyme catalyses tRNA(Ile) + L-isoleucine + ATP = L-isoleucyl-tRNA(Ile) + AMP + diphosphate. Catalyzes the attachment of isoleucine to tRNA(Ile). As IleRS can inadvertently accommodate and process structurally similar amino acids such as valine, to avoid such errors it has two additional distinct tRNA(Ile)-dependent editing activities. One activity is designated as 'pretransfer' editing and involves the hydrolysis of activated Val-AMP. The other activity is designated 'posttransfer' editing and involves deacylation of mischarged Val-tRNA(Ile). The polypeptide is Isoleucine--tRNA ligase (Legionella pneumophila (strain Corby)).